A 299-amino-acid polypeptide reads, in one-letter code: Small ribosomal subunit protein uS2 (299 aa).

The tract at residues 210-299 is disordered; it reads AEKEEQTQVV…GAATDNSWAS (90 aa). Residues 275–285 show a composition bias toward polar residues; it reads WASTGTATVGP.

It belongs to the universal ribosomal protein uS2 family. As to quaternary structure, component of the small ribosomal subunit. Mature ribosomes consist of a small (40S) and a large (60S) subunit. The 40S subunit contains about 33 different proteins and 1 molecule of RNA (18S). The 60S subunit contains about 49 different proteins and 3 molecules of RNA (28S, 5.8S and 5S). Interacts with ribosomal protein S21.

The protein resides in the cytoplasm. In terms of biological role, required for the assembly and/or stability of the 40S ribosomal subunit. Required for the processing of the 20S rRNA-precursor to mature 18S rRNA in a late step of the maturation of 40S ribosomal subunits. This chain is Small ribosomal subunit protein uS2, found in Ornithodoros parkeri (Soft tick).